A 179-amino-acid polypeptide reads, in one-letter code: MGCCTGRCTLVFICTLQMLVALERQIFDFLGYQWAPILGNFLHIIVVILGLFGTIQYRPRYIVAYTIWTAFWVAWNVFIICFYLEVGGLSKDTDLMTFNISIHRSWWREHGPGCVWRLVPAPPSKNLGDHSFISVTGCIIEYQYLEVIHSAVQILLSLIGFVYACYVISVITDEEDSST.

Helical transmembrane passes span 5–22 (TGRCTLVFICTLQMLVAL), 35–55 (APILGNFLHIIVVILGLFGTI), 62–82 (IVAYTIWTAFWVAWNVFIICF), and 151–171 (AVQILLSLIGFVYACYVISVI).

This sequence belongs to the NKAIN family. In terms of assembly, interacts with atp1b1 C-terminus.

The protein localises to the cell membrane. The sequence is that of Sodium/potassium-transporting ATPase subunit beta-1-interacting protein 3 (nkain3) from Xenopus laevis (African clawed frog).